A 189-amino-acid chain; its full sequence is MVWLLAILAYLLGSLSFAILLSQLSGGPDPRACGSGNPGTTNMLRIAGKRLAALTLLGDLGKGLLPVLIAQHAGLGVQQQAWIGLAAVSGHLYPLYFNFRGGKGVATAAGMLLGLYPPAVLPAVAAWLLVFAFTRTSSLAALAATPLCLPLLAWRQPEALLPMLLLYGVIVWRHRGNLHALFAGRERHF.

4 helical membrane passes run 1–21 (MVWL…AILL), 79–99 (QQAW…YFNF), 113–133 (LGLY…VFAF), and 151–171 (LLAW…GVIV).

The protein belongs to the PlsY family. As to quaternary structure, probably interacts with PlsX.

Its subcellular location is the cell inner membrane. The enzyme catalyses an acyl phosphate + sn-glycerol 3-phosphate = a 1-acyl-sn-glycero-3-phosphate + phosphate. It functions in the pathway lipid metabolism; phospholipid metabolism. Functionally, catalyzes the transfer of an acyl group from acyl-phosphate (acyl-PO(4)) to glycerol-3-phosphate (G3P) to form lysophosphatidic acid (LPA). This enzyme utilizes acyl-phosphate as fatty acyl donor, but not acyl-CoA or acyl-ACP. The polypeptide is Glycerol-3-phosphate acyltransferase (Azotobacter vinelandii (strain DJ / ATCC BAA-1303)).